The sequence spans 371 residues: Transposase for insertion sequence element IS421 (371 aa).

The protein belongs to the transposase 11 family.

Its function is as follows. Involved in the transposition of the insertion sequence IS421. This Escherichia coli protein is Transposase for insertion sequence element IS421.